We begin with the raw amino-acid sequence, 628 residues long: tRNA (carboxymethyluridine(34)-5-O)-methyltransferase alkbh8 (628 aa).

The RRM domain occupies 43-123 (QSLVVANGGL…ITLYLSFVEK (81 aa)). In terms of domain architecture, Fe2OG dioxygenase spans 218-335 (DPDQLTINQY…RTSFTFRKVR (118 aa)). 225–227 (NQY) lines the 2-oxoglutarate pocket. Residues His236 and Asp238 each coordinate Fe cation. Residue His240 coordinates Zn(2+). His290 is a binding site for Fe cation. Residues Arg326 and Arg332 each contribute to the 2-oxoglutarate site. Zn(2+) is bound by residues Cys339, Cys341, and Cys347. The interval 410–628 (ADVGCGNGKY…GNWCVILEKL (219 aa)) is methyltransferase domain. The segment at 563-582 (PTNKSKVTPENKEQNEKEHG) is disordered. Positions 569-582 (VTPENKEQNEKEHG) are enriched in basic and acidic residues.

The protein belongs to the alkB family. Fe(2+) is required as a cofactor.

It localises to the cytoplasm. Its subcellular location is the nucleus. The enzyme catalyses 5-(carboxymethyl)uridine(34) in tRNA + S-adenosyl-L-methionine = 5-(2-methoxy-2-oxoethyl)uridine(34) in tRNA + S-adenosyl-L-homocysteine. Its function is as follows. Catalyzes the methylation of 5-carboxymethyl uridine to 5-methylcarboxymethyl uridine at the wobble position of the anticodon loop in tRNA via its methyltransferase domain. Catalyzes the last step in the formation of 5-methylcarboxymethyl uridine at the wobble position of the anticodon loop in target tRNA. Has a preference for tRNA(Arg) and tRNA(Glu), and does not bind tRNA(Lys). Binds tRNA and catalyzes the iron and alpha-ketoglutarate dependent hydroxylation of 5-methylcarboxymethyl uridine at the wobble position of the anticodon loop in tRNA via its dioxygenase domain, giving rise to 5-(S)-methoxycarbonylhydroxymethyluridine; has a preference for tRNA(Gly). Required for normal survival after DNA damage. May inhibit apoptosis and promote cell survival and angiogenesis. The sequence is that of tRNA (carboxymethyluridine(34)-5-O)-methyltransferase alkbh8 (alkbh8) from Xenopus tropicalis (Western clawed frog).